A 227-amino-acid chain; its full sequence is Probable minor pilin MMP0600 (227 aa).

A propeptide spanning residues 1 to 7 (MAKFSKG) is cleaved from the precursor. A QXSXEXXXL motif is present at residues 8-16 (QISIELILL).

In terms of processing, the N-terminus is probably cleaved by the prepilin peptidase EppA, which recognizes the class III signal sequence.

The protein resides in the secreted. It localises to the cell surface. The protein localises to the fimbrium. This chain is Probable minor pilin MMP0600, found in Methanococcus maripaludis (strain DSM 14266 / JCM 13030 / NBRC 101832 / S2 / LL).